The chain runs to 550 residues: Hydroxylamine reductase (550 aa).

[2Fe-2S] cluster-binding residues include Cys-3, Cys-6, Cys-18, and Cys-25. 8 residues coordinate hybrid [4Fe-2O-2S] cluster: His-249, Glu-273, Cys-317, Cys-405, Cys-433, Cys-458, Glu-492, and Lys-494. Cys-405 is subject to Cysteine persulfide.

Belongs to the HCP family. It depends on [2Fe-2S] cluster as a cofactor. Hybrid [4Fe-2O-2S] cluster is required as a cofactor.

Its subcellular location is the cytoplasm. The catalysed reaction is A + NH4(+) + H2O = hydroxylamine + AH2 + H(+). In terms of biological role, catalyzes the reduction of hydroxylamine to form NH(3) and H(2)O. The chain is Hydroxylamine reductase from Salmonella choleraesuis (strain SC-B67).